The sequence spans 1860 residues: Probable helicase with zinc finger domain (1860 aa).

The C3H1-type zinc-finger motif lies at 168–196; sequence SEEYTLCKRFLEQGLCRYGAQCTSAHSQE. 661 to 668 serves as a coordination point for ATP; that stretch reads GPYGTGKT. The short motif at 787 to 790 is the DEAA box element; sequence DEAA. Disordered stretches follow at residues 1106–1136, 1158–1177, 1286–1317, 1556–1604, 1641–1709, and 1749–1860; these read RSQH…TEPF, TPPG…VQRL, ERKA…GFPA, IQPR…PPDH, RQDP…RYPS, and MSEE…TYFK. Residues 1107–1116 show a composition bias toward low complexity; the sequence is SQHPPQQGPG. Positions 1286–1298 are enriched in basic and acidic residues; the sequence is ERKAPELKEKQGD. Over residues 1301-1313 the composition is skewed to polar residues; sequence SVQNKSPEPQSNM. The segment covering 1641–1660 has biased composition (low complexity); it reads RQDPGPLQHQQQKQQLQAPQ. 2 stretches are compositionally biased toward pro residues: residues 1760 to 1769 and 1783 to 1794; these read QPPPPPPPHP and PLLPSKQTPPDP. Residues 1847 to 1860 show a composition bias toward low complexity; it reads GSSNSSNGYYTYFK.

The protein belongs to the DNA2/NAM7 helicase family.

Its subcellular location is the nucleus. May act as a helicase. The polypeptide is Probable helicase with zinc finger domain (helz) (Danio rerio (Zebrafish)).